We begin with the raw amino-acid sequence, 162 residues long: Putative ripening-related protein 7 (162 aa).

Residues 1 to 30 (MAAAAASTKIVAVVVAVLLAILEMPSCAVA) form the signal peptide.

This sequence belongs to the kiwellin family.

It is found in the secreted. In Oryza sativa subsp. japonica (Rice), this protein is Putative ripening-related protein 7.